Consider the following 131-residue polypeptide: Large ribosomal subunit protein bL17 (131 aa).

This sequence belongs to the bacterial ribosomal protein bL17 family. As to quaternary structure, part of the 50S ribosomal subunit. Contacts protein L32.

The protein is Large ribosomal subunit protein bL17 of Herminiimonas arsenicoxydans.